The chain runs to 3423 residues: MKNPKKKSGGFRIVNMLKRGVARVSPFGGLKRLPAGLLLGHGPIRMVLAILAFLRFTAIKPSLGLINRWGSVGKKEAMEIIKKFKKDLAAMLRIINARKEKKRRGADTSVGIVGLLLTTAMAAEVTRRGSAYYMYLDRNDAGEAISFPTTLGMNKCYIQIMDLGHMCDATMSYECPMLDEGVEPDDVDCWCNTTSTWVVYGTCHHKKGEARRSRRAVTLPSHSTRKLQTRSQTWLESREYTKHLIRVENWIFRNPGFALAAAAIAWLLGSSTSQKVIYLVMILLIAPAYSIRCIGVSNRDFVEGMSGGTWVDVVLEHGGCVTVMAQDKPTVDIELVTTTVSNMAEVRSYCYEASISDMASDSRCPTQGEAYLDKQSDTQYVCKRTLVDRGWGNGCGLFGKGSLVTCAKFACSKKMTGKSIQPENLEYRIMLSVHGSQHSGMIVNDTGHETDENRAKVEITPNSPRAEATLGGFGSLGLDCEPRTGLDFSDLYYLTMNNKHWLVHKEWFHDIPLPWHAGADTGTPHWNNKEALVEFKDAHAKRQTVVVLGSQEGAVHTALAGALEAEMDGAKGRLSSGHLKCRLKMDKLRLKGVSYSLCTAAFTFTKIPAETLHGTVTVEVQYAGTDGPCKVPAQMAVDMQTLTPVGRLITANPVITESTENSKMMLELDPPFGDSYIVIGVGEKKITHHWHRSGSTIGKAFEATVRGAKRMAVLGDTAWDFGSVGGALNSLGKGIHQIFGAAFKSLFGGMSWFSQILIGTLLMWLGLNTKNGSISLMCLALGGVLIFLSTAVSADVGCSVDFSKKETRCGTGVFVYNDVEAWRDRYKYHPDSPRRLAAAVKQAWEDGICGISSVSRMENIMWRSVEGELNAILEENGVQLTVVVGSVKNPMWRGPQRLPVPVNELPHGWKAWGKSYFVRAAKTNNSFVVDGDTLKECPLKHRAWNSFLVEDHGFGVFHTSVWLKVREDYSLECDPAVIGTAVKGKEAVHSDLGYWIESEKNDTWRLKRAHLIEMKTCEWPKSHTLWTDGIEESDLIIPKSLAGPLSHHNTREGYRTQMKGPWHSEELEIRFEECPGTKVHVEETCGTRGPSLRSTTASGRVIEEWCCRECTMPPLSFRAKDGCWYGMEIRPRKEPESNLVRSMVTAGSTDHMDHFSLGVLVILLMVQEGLKKRMTTKIIISTSMAVLVAMILGGFSMSDLAKLAILMGATFAEMNTGGDVAHLALIAAFKVRPALLVSFIFRANWTPRESMLLALASCLLQTAISALEGDLMVLINGFALAWLAIRAMVVPRTDNITLAILAALTPLARGTLLVAWRAGLATCGGFMLLSLKGKGSVKKNLPFVMALGLTAVRLVDPINVVGLLLLTRSGKRSWPPSEVLTAVGLICALAGGFAKADIEMAGPMAAVGLLIVSYVVSGKSVDMYIERAGDITWEKDAEVTGNSPRLDVALDESGDFSLVEDDGPPMREIILKVVLMTICGMNPIAIPFAAGAWYVYVKTGKRSGALWDVPAPKEVKKGETTDGVYRVMTRRLLGSTQVGVGVMQEGVFHTMWHVTKGSALRSGEGRLDPYWGDVKQDLVSYCGPWKLDAAWDGHSEVQLLAVPPGERARNIQTLPGIFKTKDGDIGAVALDYPAGTSGSPILDKCGRVIGLYGNGVVIKNGSYVSAITQGRREEETPVECFEPSMLKKKQLTVLDLHPGAGKTRRVLPEIVREAIKTRLRTVILAPTRVVAAEMEEALRGLPVRYMTTAVNVTHSGTEIVDLMCHATFTSRLLQPIRVPNYNLYIMDEAHFTDPSSIAARGYISTRVEMGEAAAIFMTATPPGTRDAFPDSNSPIMDTEVEVPERAWSSGFDWVTDHSGKTVWFVPSVRNGNEIAACLTKAGKRVIQLSRKTFETEFQKTKHQEWDFVVTTDISEMGANFKADRVIDSRRCLKPVILDGERVILAGPMPVTHASAAQRRGRIGRNPNKPGDEYLYGGGCAETDEDHAHWLEARMLLDNIYLQDGLIASLYRPEADKVAAIEGEFKLRTEQRKTFVELMKRGDLPVWLAYQVASAGITYTDRRWCFDGTTNNTIMEDSVPAEVWTRHGEKRVLKPRWMDARVCSDHAALKSFKEFAAGKRGAAFGVMEALGTLPGHMTERFQEAIDNLAVLMRAETGSRPYKAAAAQLPETLETIMLLGLLGTVSLGIFFVLMRNKGIGKMGFGMVTLGASAWLMWLSEIEPARIACVLIVVFLLLVVLIPEPEKQRSPQDNQMAIIIMVAVGLLGLITANELGWLERTKSDLSHLMGRREEGATIGFSMDIDLRPASAWAIYAALTTFITPAVQHAVTTSYNNYSLMAMATQAGVLFGMGKGMPFYAWDFGVPLLMIGCYSQLTPLTLIVAIILLVAHYMYLIPGLQAAAARAAQKRTAAGIMKNPVVDGIVVTDIDTMTIDPQVEKKMGQVLLIAVAVSSAILSRTAWGWGEAGALITAATSTLWEGSPNKYWNSSTATSLCNIFRGSYLAGASLIYTVTRNAGLVKRRGGGTGETLGEKWKARLNQMSALEFYSYKKSGITEVCREEARRALKDGVATGGHAVSRGSAKLRWLVERGYLQPYGKVIDLGCGRGGWSYYAATIRKVQEVKGYTKGGPGHEEPMLVQSYGWNIVRLKSGVDVFHMAAEPCDTLLCDIGESSSSPEVEEARTLRVLSMVGDWLEKRPGAFCIKVLCPYTSTMMETLERLQRRYGGGLVRVPLSRNSTHEMYWVSGAKSNTIKSVSTTSQLLLGRMDGPRRPVKYEEDVNLGSGTRAVVSCAEAPNMKIIGNRIERIRSEHAETWFFDENHPYRTWAYHGSYEAPTQGSASSLINGVVRLLSKPWDVVTGVTGIAMTDTTPYGQQRVFKEKVDTRVPDPQEGTRQVMSMVSSWLWKELGKHKRPRVCTKEEFINKVRSNAALGAIFEEEKEWKTAVEAVNDPRFWALVDKEREHHLRGECQSCVYNMMGKREKKQGEFGKAKGSRAIWYMWLGARFLEFEALGFLNEDHWMGRENSGGGVEGLGLQRLGYVLEEMSRIPGGRMYADDTAGWDTRISRFDLENEALITNQMEKGHRALALAIIKYTYQNKVVKVLRPAEKGKTVMDIISRQDQRGSGQVVTYALNTFTNLVVQLIRNMEAEEVLEMQDLWLLRRSEKVTNWLQSNGWDRLKRMAVSGDDCVVKPIDDRFAHALRFLNDMGKVRKDTQEWKPSTGWDNWEEVPFCSHHFNKLHLKDGRSIVVPCRHQDELIGRARVSPGAGWSIRETACLAKSYAQMWQLLYFHRRDLRLMANAICSSVPVDWVPTGRTTWSIHGKGEWMTTEDMLVVWNRVWIEENDHMEDKTPVTKWTDIPYLGKREDLWCGSLIGHRPRTTWAENIKNTVNMVRRIIGDEEKYMDYLSTQVRYLGEEGSTPGVL.

Residues 1–25 (MKNPKKKSGGFRIVNMLKRGVARVS) are disordered. Over 1–104 (MKNPKKKSGG…INARKEKKRR (104 aa)) the chain is Cytoplasmic. Residues 37–72 (LLLGHGPIRMVLAILAFLRFTAIKPSLGLINRWGSV) form a hydrophobic; homodimerization of capsid protein C region. The propeptide at 105–122 (GADTSVGIVGLLLTTAMA) is ER anchor for capsid protein C, removed in mature form by serine protease NS3. Residues 105-125 (GADTSVGIVGLLLTTAMAAEV) traverse the membrane as a helical segment. The Extracellular segment spans residues 126–249 (TRRGSAYYMY…YTKHLIRVEN (124 aa)). N-linked (GlcNAc...) asparagine; by host glycosylation is present at N192. A helical membrane pass occupies residues 250–269 (WIFRNPGFALAAAAIAWLLG). At 270-274 (SSTSQ) the chain is on the cytoplasmic side. Residues 275 to 290 (KVIYLVMILLIAPAYS) traverse the membrane as a helical segment. At 291-745 (IRCIGVSNRD…HQIFGAAFKS (455 aa)) the chain is on the extracellular side. K328 participates in a covalent cross-link: Glycyl lysine isopeptide (Lys-Gly) (interchain with G-Cter in ubiquitin). 2 disulfide bridges follow: C350–C406 and C382–C411. The interval 388 to 401 (DRGWGNGCGLFGKG) is fusion peptide. N444 carries an N-linked (GlcNAc...) asparagine; by host glycan. 2 cysteine pairs are disulfide-bonded: C480-C581 and C598-C629. K571 participates in a covalent cross-link: Glycyl lysine isopeptide (Lys-Gly) (interchain with G-Cter in ubiquitin). Residues 746-767 (LFGGMSWFSQILIGTLLMWLGL) traverse the membrane as a helical segment. Residues 768–773 (NTKNGS) lie on the Cytoplasmic side of the membrane. The helical transmembrane segment at 774–794 (ISLMCLALGGVLIFLSTAVSA) threads the bilayer. Over 795 to 1177 (DVGCSVDFSK…EGLKKRMTTK (383 aa)) the chain is Lumenal. 6 cysteine pairs are disulfide-bonded: C798–C809, C849–C937, C973–C1017, C1074–C1123, C1085–C1106, and C1107–C1110. N-linked (GlcNAc...) asparagine; by host glycosylation is found at N924 and N1001. The chain crosses the membrane as a helical span at residues 1178 to 1198 (IIISTSMAVLVAMILGGFSMS). Topologically, residues 1199–1220 (DLAKLAILMGATFAEMNTGGDV) are cytoplasmic. The chain crosses the membrane as a helical span at residues 1221–1241 (AHLALIAAFKVRPALLVSFIF). Residues 1242 to 1270 (RANWTPRESMLLALASCLLQTAISALEGD) lie on the Lumenal side of the membrane. A helical membrane pass occupies residues 1271–1291 (LMVLINGFALAWLAIRAMVVP). Residues 1292–1295 (RTDN) lie on the Cytoplasmic side of the membrane. A helical membrane pass occupies residues 1296-1316 (ITLAILAALTPLARGTLLVAW). Over 1317–1345 (RAGLATCGGFMLLSLKGKGSVKKNLPFVM) the chain is Lumenal. The chain crosses the membrane as a helical span at residues 1346 to 1366 (ALGLTAVRLVDPINVVGLLLL). The Cytoplasmic portion of the chain corresponds to 1367-1373 (TRSGKRS). A helical transmembrane segment spans residues 1374–1394 (WPPSEVLTAVGLICALAGGFA). Residues 1395–1397 (KAD) are Lumenal-facing. Residues 1398–1418 (IEMAGPMAAVGLLIVSYVVSG) form a helical membrane-spanning segment. Residues 1419–1472 (KSVDMYIERAGDITWEKDAEVTGNSPRLDVALDESGDFSLVEDDGPPMREIILK) are Cytoplasmic-facing. The interval 1425–1464 (IERAGDITWEKDAEVTGNSPRLDVALDESGDFSLVEDDGP) is interacts with and activates NS3 protease. A disordered region spans residues 1429–1451 (GDITWEKDAEVTGNSPRLDVALD). The segment at residues 1473-1493 (VVLMTICGMNPIAIPFAAGAW) is an intramembrane region (helical). The Lumenal segment spans residues 1494–2170 (YVYVKTGKRS…KAAAAQLPET (677 aa)). The Peptidase S7 domain occupies 1503-1680 (SGALWDVPAP…RREEETPVEC (178 aa)). Residues H1553, D1577, and S1637 each act as charge relay system; for serine protease NS3 activity in the active site. One can recognise a Helicase ATP-binding domain in the interval 1683–1839 (PSMLKKKQLT…DSNSPIMDTE (157 aa)). The important for RNA-binding stretch occupies residues 1687–1690 (KKKQ). 1696-1703 (LHPGAGKT) provides a ligand contact to ATP. Positions 1787-1790 (DEAH) match the DEAH box motif. Residues 1834–2013 (PIMDTEVEVP…GLIASLYRPE (180 aa)) form the Helicase C-terminal domain. K1891 carries the post-translational modification N6-acetyllysine; by host. A helical membrane pass occupies residues 2171–2191 (LETIMLLGLLGTVSLGIFFVL). Topologically, residues 2192 to 2195 (MRNK) are lumenal. Positions 2196-2216 (GIGKMGFGMVTLGASAWLMWL) form an intramembrane region, helical. The Cytoplasmic segment spans residues 2217–2218 (SE). A helical membrane pass occupies residues 2219 to 2239 (IEPARIACVLIVVFLLLVVLI). Topologically, residues 2240-2254 (PEPEKQRSPQDNQMA) are lumenal. Residues 2255-2269 (IIIMVAVGLLGLITA) constitute an intramembrane region (helical). Residues 2270 to 2307 (NELGWLERTKSDLSHLMGRREEGATIGFSMDIDLRPAS) lie on the Lumenal side of the membrane. The helical intramembrane region spans 2308–2328 (AWAIYAALTTFITPAVQHAVT). Topologically, residues 2329–2344 (TSYNNYSLMAMATQAG) are lumenal. A helical membrane pass occupies residues 2345–2365 (VLFGMGKGMPFYAWDFGVPLL). The Cytoplasmic portion of the chain corresponds to 2366–2375 (MIGCYSQLTP). The helical transmembrane segment at 2376 to 2396 (LTLIVAIILLVAHYMYLIPGL) threads the bilayer. The Lumenal portion of the chain corresponds to 2397 to 2441 (QAAAARAAQKRTAAGIMKNPVVDGIVVTDIDTMTIDPQVEKKMGQ). The chain crosses the membrane as a helical span at residues 2442–2462 (VLLIAVAVSSAILSRTAWGWG). At 2463-3423 (EAGALITAAT…GEEGSTPGVL (961 aa)) the chain is on the cytoplasmic side. An mRNA cap 0-1 NS5-type MT domain is found at 2521–2785 (GGGTGETLGE…DVNLGSGTRA (265 aa)). A GTP-binding site is contributed by 2533-2539 (KARLNQM). Residue S2576 participates in S-adenosyl-L-methionine binding. Phosphoserine is present on S2576. K2581 (for 2'-O-MTase activity) is an active-site residue. The tract at residues 2597 to 2600 (VIDL) is SUMO-interacting motif (SIM). 10 residues coordinate S-adenosyl-L-methionine: G2606, W2607, T2624, K2625, H2630, E2631, D2651, V2652, D2666, and I2667. D2666 serves as the catalytic For 2'-O-MTase activity. 2669–2675 (ESSSSPE) serves as a coordination point for GTP. K2702 functions as the For 2'-O-MTase activity in the catalytic mechanism. GTP is bound at residue 2733-2735 (RNS). Residue E2738 is the For 2'-O-MTase activity of the active site. Y2740 lines the S-adenosyl-L-methionine pocket. The short motif at 2908 to 2914 (KHKRPRV) is the Nuclear localization signal (NLS) element. Residues E2959, H2963, C2968, and C2971 each coordinate Zn(2+). The region spanning 3049 to 3199 (GRMYADDTAG…KPIDDRFAHA (151 aa)) is the RdRp catalytic domain. Residues H3234, C3250, and C3369 each contribute to the Zn(2+) site.

This sequence in the N-terminal section; belongs to the class I-like SAM-binding methyltransferase superfamily. mRNA cap 0-1 NS5-type methyltransferase family. In terms of assembly, homodimer. Interacts with host SERTAD3; this interaction promotes capsid protein C degradation. Interacts with host CAPRIN1; this interaction is probably linked to the inhibition of stress granules formation by the virus. Interacts with host G3BP1; this interaction is probably linked to the inhibition of stress granules formation by the virus. As to quaternary structure, forms heterodimers with envelope protein E in the endoplasmic reticulum and Golgi. Interacts with non-structural protein 2A. Homodimer; in the endoplasmic reticulum and Golgi. Interacts with host TYRO3, AXL and DC-SIGN proteins. Interacts with non-structural protein 2A. Interacts with host HAVCR1; this interaction likely mediates virus attachment to host cell. Interacts with host NCAM1. Interacts with host HSPA5. Interacts with Aedes aegypti SRPN25, APY and venom allergen-1 salivary proteins; the interactions do not affect Zika virus replication in human endothelial cells and keratinocytes. In terms of assembly, homodimer; Homohexamer when secreted. Interacts with host TBK1. Interacts with host USP8. Interacts with envelope protein E. As to quaternary structure, interacts with the structural protein prM/E complex, and the NS2B/NS3 protease complex. Forms a heterodimer with serine protease NS3. May form homooligomers. Interacts with human SPCS1. Interacts with non-structural protein 2A. In terms of assembly, forms a heterodimer with NS2B. Interacts with NS4B. Interacts with unphosphorylated RNA-directed RNA polymerase NS5; this interaction stimulates RNA-directed RNA polymerase NS5 guanylyltransferase activity. Interacts with non-structural protein 2A. Interacts with host SHFL; this interaction promotes NS3 degradation via a lysosome-dependent pathway. Interacts with host CEP63; this interaction disorganizes the centrosome and inhibits host innate immune response. As to quaternary structure, may interact with host ANKLE2; the interaction may cause defects in brain development, such as microcephaly. May interact with host SRPRA and SEC61G. Interacts with serine protease NS3. Interacts with NS1. In terms of assembly, homodimer; dimerization may negatively regulate the GTase activity, a crucial step in the capping process. Interacts with host STAT2; this interaction inhibits the phosphorylation of the latter, and, when all viral proteins are present (polyprotein), targets STAT2 for degradation. Interacts with host TBK1 and IKBKE; these interactions lead to the inhibition of the host RIG-I signaling pathway. Interacts with host PAF1 complex; the interaction may prevent the recruitment of the host PAF1 complex to interferon-responsive genes, and thus reduces the immune response. Interacts with serine protease NS3. Interacts with host KPNA2. Interacts with host ZSWIM8; this interaction allows STAT2 binding to ZSWIM8 and subsequent proteasomal degradation leading to inhibition of interferon signaling. Specific enzymatic cleavages in vivo yield mature proteins. Cleavages in the lumen of endoplasmic reticulum are performed by host signal peptidase, whereas cleavages in the cytoplasmic side are performed by serine protease NS3. Signal cleavage at the 2K-4B site requires a prior NS3 protease-mediated cleavage at the 4A-2K site. In terms of processing, cleaved in post-Golgi vesicles by a host furin, releasing the mature small envelope protein M, and peptide pr. This cleavage is incomplete as up to 30% of viral particles still carry uncleaved prM. Post-translationally, N-glycosylation plays a role in virulence in mammalian and mosquito hosts, but may have no effect on neurovirulence. Ubiquitination by host TRIM7 promotes virus attachment and fusion of the virus and the host endosome membrane. In terms of processing, N-glycosylated. The excreted form is glycosylated, which is required for efficient secretion of the protein from infected cells. Post-translationally, ubiquitination by host TRIM22 leads to proteasomal degradation. Acetylated by host KAT5. Acetylation modulates NS3 RNA-binding and unwinding activities and plays an important positive role for viral replication. In terms of processing, phosphorylated on serines residues. This phosphorylation may trigger NS5 nuclear localization. Post-translationally, sumoylated, required for regulating IFN induced interferon stimulated genes/ISGs.

The protein localises to the virion. Its subcellular location is the host nucleus. It localises to the host cytoplasm. It is found in the host perinuclear region. The protein resides in the secreted. The protein localises to the virion membrane. Its subcellular location is the host endoplasmic reticulum membrane. It catalyses the reaction a 5'-end (5'-triphosphoguanosine)-ribonucleoside in mRNA + S-adenosyl-L-methionine = a 5'-end (N(7)-methyl 5'-triphosphoguanosine)-ribonucleoside in mRNA + S-adenosyl-L-homocysteine. The enzyme catalyses a 5'-end (N(7)-methyl 5'-triphosphoguanosine)-ribonucleoside in mRNA + S-adenosyl-L-methionine = a 5'-end (N(7)-methyl 5'-triphosphoguanosine)-(2'-O-methyl-ribonucleoside) in mRNA + S-adenosyl-L-homocysteine + H(+). It carries out the reaction RNA(n) + a ribonucleoside 5'-triphosphate = RNA(n+1) + diphosphate. The catalysed reaction is Selective hydrolysis of -Xaa-Xaa-|-Yaa- bonds in which each of the Xaa can be either Arg or Lys and Yaa can be either Ser or Ala.. It catalyses the reaction a ribonucleoside 5'-triphosphate + H2O = a ribonucleoside 5'-diphosphate + phosphate + H(+). The enzyme catalyses ATP + H2O = ADP + phosphate + H(+). In terms of biological role, plays a role in virus budding by binding to the cell membrane and gathering the viral RNA into a nucleocapsid that forms the core of the mature virus particle. During virus entry, may induce genome penetration into the host cytoplasm after hemifusion induced by the surface proteins. Can migrate to the cell nucleus where it modulates host functions. Inhibits the integrated stress response (ISR) in the infected cell. Its function is as follows. Inhibits RNA silencing by interfering with host Dicer. Prevents premature fusion activity of envelope proteins in trans-Golgi by binding to envelope protein E at pH 6.0. After virion release in extracellular space, gets dissociated from E dimers. Functionally, plays a role in host immune defense modulation and protection of envelope protein E during virion synthesis. PrM-E cleavage is inefficient, many virions are only partially matured and immature prM-E proteins could play a role in immune evasion. Contributes to fetal microcephaly in humans. Acts as a chaperone for envelope protein E during intracellular virion assembly by masking and inactivating envelope protein E fusion peptide. prM is the only viral peptide matured by host furin in the trans-Golgi network probably to avoid catastrophic activation of the viral fusion activity in acidic Golgi compartment prior to virion release. In terms of biological role, may play a role in virus budding. Exerts cytotoxic effects by activating a mitochondrial apoptotic pathway through M ectodomain. May display a viroporin activity. Its function is as follows. Binds to host cell surface receptors and mediates fusion between viral and cellular membranes. Efficient virus attachment to cell is, at least in part, mediated by host HAVCR1 in a cell-type specific manner. In addition, host NCAM1 can also be used as entry receptor. Interaction with host HSPA5 plays an important role in the early stages of infection as well. Envelope protein is synthesized in the endoplasmic reticulum and forms a heterodimer with protein prM. The heterodimer plays a role in virion budding in the ER, and the newly formed immature particle is covered with 60 spikes composed of heterodimers between precursor prM and envelope protein E. The virion is transported to the Golgi apparatus where the low pH causes the dissociation of PrM-E heterodimers and formation of E homodimers. PrM-E cleavage is inefficient, many virions are only partially matured and immature prM-E proteins could play a role in immune evasion. Plays a role in the inhibition of host RLR-induced interferon-beta activation by targeting TANK-binding kinase 1/TBK1. In addition, recruits the host deubiquitinase USP8 to cleave 'Lys-11'-linked polyubiquitin chains from caspase-1/CASP1 thus inhibiting its proteasomal degradation. In turn, stabilized CASP1 promotes cleavage of cGAS, which inhibits its ability to recognize mitochondrial DNA release and initiate type I interferon signaling. Functionally, component of the viral RNA replication complex that recruits genomic RNA, the structural protein prM/E complex, and the NS2B/NS3 protease complex to the virion assembly site and orchestrates virus morphogenesis. Antagonizes also the host MDA5-mediated induction of alpha/beta interferon antiviral response. May disrupt adherens junction formation and thereby impair proliferation of radial cells in the host cortex. In terms of biological role, required cofactor for the serine protease function of NS3. Its function is as follows. Displays three enzymatic activities: serine protease, NTPase and RNA helicase. NS3 serine protease, in association with NS2B, performs its autocleavage and cleaves the polyprotein at dibasic sites in the cytoplasm: C-prM, NS2A-NS2B, NS2B-NS3, NS3-NS4A, NS4A-2K and NS4B-NS5. NS3 RNA helicase binds RNA and unwinds dsRNA in the 3' to 5' direction. Inhibits the integrated stress response (ISR) in the infected cell by blocking stress granules assembly. Disrupts host centrosome organization in a CEP63-dependent manner to degrade host TBK1 and inhibits innate immune response. Regulates the ATPase activity of the NS3 helicase activity. NS4A allows NS3 helicase to conserve energy during unwinding. Cooperatively with NS4B suppresses the Akt-mTOR pathway and leads to cellular dysregulation. By inhibiting host ANKLE2 functions, may cause defects in brain development, such as microcephaly. Also antagonizes the host MDA5-mediated induction of alpha/beta interferon antiviral response. Inhibits the integrated stress response (ISR) in the infected cell by blocking stress granules assembly. Functionally, functions as a signal peptide for NS4B and is required for the interferon antagonism activity of the latter. In terms of biological role, induces the formation of ER-derived membrane vesicles where the viral replication takes place. Also plays a role in the inhibition of host RLR-induced interferon-beta production at TANK-binding kinase 1/TBK1 level. Cooperatively with NS4A suppresses the Akt-mTOR pathway and leads to cellular dysregulation. Its function is as follows. Replicates the viral (+) and (-) RNA genome, and performs the capping of genomes in the cytoplasm. Methylates viral RNA cap at guanine N-7 and ribose 2'-O positions. Once sufficient NS5 is expressed, binds to the cap-proximal structure and inhibits further translation of the viral genome. Besides its role in RNA genome replication, also prevents the establishment of a cellular antiviral state by blocking the interferon-alpha/beta (IFN-alpha/beta) signaling pathway. Mechanistically, interferes with host kinases TBK1 and IKKE upstream of interferon regulatory factor 3/IRF3 to inhibit the RIG-I pathway. Also antagonizes type I interferon signaling by targeting STAT2 for degradation by the proteasome thereby preventing activation of JAK-STAT signaling pathway. Mechanistically, acts as a scaffold protein to connect host ZSWIM8/CUL3 ligase complex and STAT2, leading to STAT2 degradation. Within the host nucleus, disrupts host SUMO1 and STAT2 co-localization with PML, resulting in PML degradation. May also reduce immune responses by preventing the recruitment of the host PAF1 complex to interferon-responsive genes. This chain is Genome polyprotein, found in Zika virus (isolate ZIKV/Human/French Polynesia/10087PF/2013) (ZIKV).